Consider the following 360-residue polypeptide: sn-glycerol-3-phosphate import ATP-binding protein UgpC (360 aa).

In terms of domain architecture, ABC transporter spans leucine 4 to isoleucine 235. Glycine 37–serine 44 lines the ATP pocket.

It belongs to the ABC transporter superfamily. sn-glycerol-3-phosphate importer (TC 3.A.1.1.3) family. As to quaternary structure, the complex is composed of two ATP-binding proteins (UgpC), two transmembrane proteins (UgpA and UgpE) and a solute-binding protein (UgpB).

It localises to the cell inner membrane. The enzyme catalyses sn-glycerol 3-phosphate(out) + ATP + H2O = sn-glycerol 3-phosphate(in) + ADP + phosphate + H(+). In terms of biological role, part of the ABC transporter complex UgpBAEC involved in sn-glycerol-3-phosphate (G3P) import. Responsible for energy coupling to the transport system. In Burkholderia pseudomallei (strain K96243), this protein is sn-glycerol-3-phosphate import ATP-binding protein UgpC.